Consider the following 110-residue polypeptide: uncharacterized protein (110 aa).

Functionally, may play a regulatory role in sulfomenaquinone (SMK) biosynthesis. This is an uncharacterized protein from Mycobacterium bovis (strain ATCC BAA-935 / AF2122/97).